The following is a 415-amino-acid chain: Levansucrase (415 aa).

Residues Trp45, Asp46, Ala132, Arg202, and Asp203 each contribute to the sucrose site. Catalysis depends on Asp46, which acts as the Nucleophile. The Proton donor/acceptor role is filled by Glu287.

Belongs to the glycosyl hydrolase 68 family.

It carries out the reaction [6)-beta-D-fructofuranosyl-(2-&gt;](n) alpha-D-glucopyranoside + sucrose = [6)-beta-D-fructofuranosyl-(2-&gt;](n+1) alpha-D-glucopyranoside + D-glucose. Functionally, catalyzes the synthesis of levan, a fructose polymer, by transferring the fructosyl moiety from sucrose to a growing acceptor molecule. The protein is Levansucrase of Rahnella aquatilis (strain ATCC 33071 / DSM 4594 / JCM 1683 / NBRC 105701 / NCIMB 13365 / CIP 78.65).